The following is a 232-amino-acid chain: A-type ATP synthase subunit D (232 aa).

This sequence belongs to the V-ATPase D subunit family. As to quaternary structure, has multiple subunits with at least A(3), B(3), C, D, E, F, H, I and proteolipid K(x).

The protein localises to the cell membrane. Its function is as follows. Component of the A-type ATP synthase that produces ATP from ADP in the presence of a proton gradient across the membrane. This chain is A-type ATP synthase subunit D, found in Methanopyrus kandleri (strain AV19 / DSM 6324 / JCM 9639 / NBRC 100938).